Reading from the N-terminus, the 327-residue chain is Immunodominant envelope protein p35 (327 aa).

Residues 41 to 69 (KNGYDDYRDPPSPKPLPKSKQEPNADDKV) form a disordered region. Basic and acidic residues predominate over residues 59 to 69 (SKQEPNADDKV). Residues 291–311 (ITMMFLIAIVIIIGLAIFDIN) form a helical membrane-spanning segment.

Belongs to the poxviruses protein p35 family.

The protein resides in the virion membrane. Envelope protein that binds to the cell surface to provide virion attachment to target cell. The sequence is that of Immunodominant envelope protein p35 from Fowlpox virus (strain NVSL) (FPV).